A 79-amino-acid polypeptide reads, in one-letter code: uncharacterized protein (79 aa).

Residues 1–33 (MRLSIRAIVLFALVWIGLLMSGYGVLVGSKVNA) form the signal peptide.

This is an uncharacterized protein from Salmonella paratyphi A (strain ATCC 9150 / SARB42).